The following is a 357-amino-acid chain: Phosphate acyltransferase (357 aa).

The protein belongs to the PlsX family. Homodimer. Probably interacts with PlsY.

Its subcellular location is the cytoplasm. It carries out the reaction a fatty acyl-[ACP] + phosphate = an acyl phosphate + holo-[ACP]. The protein operates within lipid metabolism; phospholipid metabolism. Functionally, catalyzes the reversible formation of acyl-phosphate (acyl-PO(4)) from acyl-[acyl-carrier-protein] (acyl-ACP). This enzyme utilizes acyl-ACP as fatty acyl donor, but not acyl-CoA. This is Phosphate acyltransferase from Roseobacter denitrificans (strain ATCC 33942 / OCh 114) (Erythrobacter sp. (strain OCh 114)).